Reading from the N-terminus, the 99-residue chain is Monothiol glutaredoxin-S11 (99 aa).

Residues 1–99 (MDKVMRMSSE…LVPLVKPYLC (99 aa)) enclose the Glutaredoxin domain. A [2Fe-2S] cluster-binding site is contributed by C21.

It belongs to the glutaredoxin family. CC-type subfamily.

The protein localises to the cytoplasm. Functionally, may only reduce GSH-thiol disulfides, but not protein disulfides. In Arabidopsis thaliana (Mouse-ear cress), this protein is Monothiol glutaredoxin-S11 (GRXS11).